Here is a 69-residue protein sequence, read N- to C-terminus: Sec-independent protein translocase protein TatA (69 aa).

The helical transmembrane segment at 1–21 (MFGLGGQELVLILLIILLLFG) threads the bilayer. Residues 48 to 69 (EELNKAVDDTPEKEKKSSSEKS) form a disordered region.

The protein belongs to the TatA/E family. Forms a complex with TatC.

The protein resides in the cell inner membrane. Part of the twin-arginine translocation (Tat) system that transports large folded proteins containing a characteristic twin-arginine motif in their signal peptide across membranes. TatA could form the protein-conducting channel of the Tat system. In Chlorobium phaeobacteroides (strain BS1), this protein is Sec-independent protein translocase protein TatA.